Reading from the N-terminus, the 191-residue chain is Protein GrpE (191 aa).

Positions 1-10 are enriched in basic and acidic residues; that stretch reads MNHEEQKVET. The disordered stretch occupies residues 1 to 28; that stretch reads MNHEEQKVETMEQVEAQPVEPTDVDSEV.

It belongs to the GrpE family. In terms of assembly, homodimer.

It localises to the cytoplasm. Participates actively in the response to hyperosmotic and heat shock by preventing the aggregation of stress-denatured proteins, in association with DnaK and GrpE. It is the nucleotide exchange factor for DnaK and may function as a thermosensor. Unfolded proteins bind initially to DnaJ; upon interaction with the DnaJ-bound protein, DnaK hydrolyzes its bound ATP, resulting in the formation of a stable complex. GrpE releases ADP from DnaK; ATP binding to DnaK triggers the release of the substrate protein, thus completing the reaction cycle. Several rounds of ATP-dependent interactions between DnaJ, DnaK and GrpE are required for fully efficient folding. In Aeromonas salmonicida (strain A449), this protein is Protein GrpE.